The primary structure comprises 113 residues: Putative pterin-4-alpha-carbinolamine dehydratase (113 aa).

It belongs to the pterin-4-alpha-carbinolamine dehydratase family.

The catalysed reaction is (4aS,6R)-4a-hydroxy-L-erythro-5,6,7,8-tetrahydrobiopterin = (6R)-L-erythro-6,7-dihydrobiopterin + H2O. This is Putative pterin-4-alpha-carbinolamine dehydratase from Rickettsia bellii (strain OSU 85-389).